Consider the following 224-residue polypeptide: Prothoracicotropic hormone (224 aa).

The first 29 residues, 1 to 29 (MITRPIILVILCYAILMIVQSFVPKAVAL), serve as a signal peptide directing secretion. 3 cysteine pairs are disulfide-bonded: Cys-132–Cys-169, Cys-155–Cys-211, and Cys-163–Cys-213. N-linked (GlcNAc...) asparagine glycosylation is present at Asn-156.

In terms of assembly, homodimer; disulfide-linked. As to expression, PTTH is synthesized by two dorsolateral neurosecretory cells of the Bombyx brain.

Functionally, PTTH is a brain secretory polypeptide of insects which stimulates the prothoracic glands to produce and release ecdysone, the steroid essential to insect development. Peptides P2K and P6K are presumed to be cleaved post-translationally and may play some unknown physiologically or developmentally important functions. This chain is Prothoracicotropic hormone, found in Bombyx mori (Silk moth).